We begin with the raw amino-acid sequence, 487 residues long: Glutamyl-tRNA(Gln) amidotransferase subunit A (487 aa).

Active-site charge relay system residues include Lys78 and Ser153. The Acyl-ester intermediate role is filled by Ser177.

The protein belongs to the amidase family. GatA subfamily. In terms of assembly, heterotrimer of A, B and C subunits.

The enzyme catalyses L-glutamyl-tRNA(Gln) + L-glutamine + ATP + H2O = L-glutaminyl-tRNA(Gln) + L-glutamate + ADP + phosphate + H(+). Its function is as follows. Allows the formation of correctly charged Gln-tRNA(Gln) through the transamidation of misacylated Glu-tRNA(Gln) in organisms which lack glutaminyl-tRNA synthetase. The reaction takes place in the presence of glutamine and ATP through an activated gamma-phospho-Glu-tRNA(Gln). The protein is Glutamyl-tRNA(Gln) amidotransferase subunit A of Oenococcus oeni (strain ATCC BAA-331 / PSU-1).